A 192-amino-acid polypeptide reads, in one-letter code: Peptidyl-tRNA hydrolase (192 aa).

TRNA is bound at residue Tyr17. The active-site Proton acceptor is the His22. Tyr68, Asn70, and Asn116 together coordinate tRNA.

This sequence belongs to the PTH family. Monomer.

Its subcellular location is the cytoplasm. It carries out the reaction an N-acyl-L-alpha-aminoacyl-tRNA + H2O = an N-acyl-L-amino acid + a tRNA + H(+). Its function is as follows. Hydrolyzes ribosome-free peptidyl-tRNAs (with 1 or more amino acids incorporated), which drop off the ribosome during protein synthesis, or as a result of ribosome stalling. Functionally, catalyzes the release of premature peptidyl moieties from peptidyl-tRNA molecules trapped in stalled 50S ribosomal subunits, and thus maintains levels of free tRNAs and 50S ribosomes. In Mycolicibacterium gilvum (strain PYR-GCK) (Mycobacterium gilvum (strain PYR-GCK)), this protein is Peptidyl-tRNA hydrolase.